The chain runs to 406 residues: MTQSQLRNGPDDNGLFGAFGGRYVAETLMPLILDLAREYEKAKEDPEFLKELAYFQRDYVGRPSPLYFAERLTEHCGGAKIYLKREELNHTGAHKINNCIGQILLARRMGKKRIIAETGAGMHGVATATVAARFGLDCVIYMGTTDIERQQANVFRMKLLGAEVIPVVAGTGTLKDAMNEALRDWVTNVDSTFYLIGTVAGPHPYPAMVRDFQAVIGKETREQMQAQEGRLPDSLVACIGGGSNAMGLFHPFLDDKSVEIIGVEAAGYGIETGKHAASLNGGVPGVLHGNRTFLLQDDDGQIIDAHSISAGLDYPGIGPEHAWLHDIGRVEYTSVTDDEALAAFHQCCRLEGIIPALESAHALAEVFKRAPNLPKDHLMVVNLSGRGDKDMQTVMHHMQQSQQEKH.

Position 95 is an N6-(pyridoxal phosphate)lysine (Lys95).

This sequence belongs to the TrpB family. Tetramer of two alpha and two beta chains. Pyridoxal 5'-phosphate is required as a cofactor.

The catalysed reaction is (1S,2R)-1-C-(indol-3-yl)glycerol 3-phosphate + L-serine = D-glyceraldehyde 3-phosphate + L-tryptophan + H2O. Its pathway is amino-acid biosynthesis; L-tryptophan biosynthesis; L-tryptophan from chorismate: step 5/5. In terms of biological role, the beta subunit is responsible for the synthesis of L-tryptophan from indole and L-serine. The polypeptide is Tryptophan synthase beta chain (Pseudomonas fluorescens (strain ATCC BAA-477 / NRRL B-23932 / Pf-5)).